The sequence spans 664 residues: Sulfoquinovosidase (664 aa).

Residues E135, E270, R283, L284, and W286 each contribute to the 3-(6-sulfo-alpha-D-quinovosyl)glycerol site. D388 functions as the Nucleophile in the catalytic mechanism. E391 is an active-site residue. R438 provides a ligand contact to 3-(6-sulfo-alpha-D-quinovosyl)glycerol. Residue D455 is the Proton donor of the active site. Residue H520 coordinates 3-(6-sulfo-alpha-D-quinovosyl)glycerol.

The protein belongs to the glycosyl hydrolase 31 family.

The catalysed reaction is 3-(6-sulfo-alpha-D-quinovosyl)glycerol + H2O = 6-sulfo-alpha-D-quinovose + glycerol. Functionally, part of the sulfoquinovose monooxygenase (sulfo-SMO) pathway, a D-sulfoquinovose degradation pathway that enables the complete utilization of all carbons within sulfoquinovose (SQ) with concomitant production of inorganic sulfite. Catalyzes the first step of the pathway, the hydrolysis of sulfoquinovosyl glycerol (SQGro) to release sulfoquinovose (SQ). Hydrolyzes both epimers of SQGro, with a preference for the natural 2'R isomer. In vitro, can use the substrate analog para-nitrophenyl alpha-sulfoquinovoside (PNPSQ), but shows no detectable activity toward 4-nitrophenyl alpha-D-glucopyranoside (PNPGlc). The chain is Sulfoquinovosidase from Agrobacterium fabrum (strain C58 / ATCC 33970) (Agrobacterium tumefaciens (strain C58)).